A 129-amino-acid chain; its full sequence is Serum amyloid A-4 protein (129 aa).

The N-terminal stretch at 1-18 (MKLLIGILFCTLIMGVTG) is a signal peptide. Over residues 107-121 (AEEWGRSGQDPDHFR) the composition is skewed to basic and acidic residues. The segment at 107–129 (AEEWGRSGQDPDHFRPAGLPKKY) is disordered.

The protein belongs to the SAA family. As to quaternary structure, apolipoprotein of the HDL complex.

The protein localises to the secreted. Functionally, major acute phase reactant. In Bos taurus (Bovine), this protein is Serum amyloid A-4 protein.